The chain runs to 388 residues: Cdc42 effector protein 1 (388 aa).

The segment at 1-28 (MPGPQGGTGAPSMSLGKLSPVGWVPSSH) is disordered. Residues Ser-19 and Ser-27 each carry the phosphoserine modification. Position 34 is a phosphothreonine (Thr-34). The 15-residue stretch at 38–52 (ISPPLGDFRHTMHVG) folds into the CRIB domain. Ser-39 is subject to Phosphoserine. An Omega-N-methylarginine modification is found at Arg-53. Phosphoserine is present on residues Ser-65, Ser-77, Ser-101, Ser-113, Ser-121, and Ser-139. The segment at 165-206 (RLPRVEKHSSRDRDHDRDPDHSQDREQSSSPSEPNPNPELRR) is disordered. Positions 167–191 (PRVEKHSSRDRDHDRDPDHSQDREQ) are enriched in basic and acidic residues. A phosphoserine mark is found at Ser-193, Ser-207, Ser-209, and Ser-212. 2 repeat units span residues 237–243 (PAANPPA) and 250–256 (PTAKPPA). Residues 237 to 257 (PAANPPAPAANPAPTAKPPAD) are disordered. The interval 237–270 (PAANPPAPAANPAPTAKPPADAVTTLDTVTSLPA) is 2 X 7 AA tandem repeats of [PT]-[AT]-A-[ENT]-[PT]-[PTS]-[AG]. Pro residues predominate over residues 239 to 253 (ANPPAPAANPAPTAK). Phosphoserine is present on residues Ser-298, Ser-318, Ser-347, and Ser-350.

It belongs to the BORG/CEP family. As to quaternary structure, interacts with RHOQ and CDC42, in a GTP-dependent manner.

The protein resides in the endomembrane system. It is found in the cytoplasm. It localises to the cytoskeleton. Functionally, probably involved in the organization of the actin cytoskeleton. Induced membrane extensions in fibroblasts. The sequence is that of Cdc42 effector protein 1 from Rattus norvegicus (Rat).